The following is a 711-amino-acid chain: Dixin (711 aa).

L2 carries the N-myristoyl glycine lipid modification. V13 is subject to Phosphoserine. The Calponin-homology (CH) domain occupies E20 to K153. The segment at K153–K326 is actin-binding. At S212 the chain carries Phosphoserine. Disordered regions lie at residues G233 to E258, V271 to R298, and T584 to A623. Residues S237–S254 show a composition bias toward low complexity. S257 is modified (phosphoserine). A compositionally biased stretch (basic and acidic residues) spans I278–P295. Positions E279–E452 form a coiled coil. Positions P597–A623 are enriched in polar residues. A DIX domain is found at Q600–G680. S618 bears the Phosphoserine mark.

It belongs to the DIXDC1 family. May bind filamentous actin. Directly interacts (via DIX domain) with DVL2 (via DIX domain). Interacts with gamma-tubulin. Interacts with the complex composed of DVL2 and Rac. Interacts with AXIN1; competes with MAP3K1. Interacts with MAP3K4 preventing MAP3K4 interaction with AXIN1. Post-translationally, phosphorylated on tyrosine and serine residues. In terms of processing, polyubiquitinated, leading to its proteasomal degradation. WNT3A signaling increases DIXDC1 protein levels by inhibiting its ubiquitination and subsequent degradation. Abundantly expressed in brain and testis and to a lower extent in lung, kidney, colon, ovary and urinary bladder. Expressed in brain, liver, testis and spleen (at protein level). Expressed throughout the brain with strong expression in main and accessory olfactory bulbs, cerebral cortex, piriform cortex, hippocampus, habenular nucleus, dorsal thalamus, superior and inferior colliculi and cerebellum.

It is found in the cell junction. The protein localises to the focal adhesion. It localises to the cytoplasm. The protein resides in the cytoskeleton. Its subcellular location is the stress fiber. In terms of biological role, positive effector of the Wnt signaling pathway; activates WNT3A signaling via DVL2. Regulates JNK activation by AXIN1 and DVL2. In Mus musculus (Mouse), this protein is Dixin (Dixdc1).